Reading from the N-terminus, the 159-residue chain is uncharacterized protein (159 aa).

Residues 1–13 (MTQPTRPSVTCDQ) are compositionally biased toward polar residues. The tract at residues 1–57 (MTQPTRPSVTCDQGSSTIGGTAAQATTSSSATSGSNYQRDRLGRRPEIGVGGQPQIC) is disordered. Residues 14–35 (GSSTIGGTAAQATTSSSATSGS) show a composition bias toward low complexity. Positions 38–47 (QRDRLGRRPE) are enriched in basic and acidic residues.

This is an uncharacterized protein from Homo sapiens (Human).